The sequence spans 308 residues: Sulfate adenylyltransferase subunit 2 (308 aa).

It belongs to the PAPS reductase family. CysD subfamily. As to quaternary structure, heterodimer composed of CysD, the smaller subunit, and CysN.

The catalysed reaction is sulfate + ATP + H(+) = adenosine 5'-phosphosulfate + diphosphate. It functions in the pathway sulfur metabolism; hydrogen sulfide biosynthesis; sulfite from sulfate: step 1/3. With CysN forms the ATP sulfurylase (ATPS) that catalyzes the adenylation of sulfate producing adenosine 5'-phosphosulfate (APS) and diphosphate, the first enzymatic step in sulfur assimilation pathway. APS synthesis involves the formation of a high-energy phosphoric-sulfuric acid anhydride bond driven by GTP hydrolysis by CysN coupled to ATP hydrolysis by CysD. This is Sulfate adenylyltransferase subunit 2 from Chromobacterium violaceum (strain ATCC 12472 / DSM 30191 / JCM 1249 / CCUG 213 / NBRC 12614 / NCIMB 9131 / NCTC 9757 / MK).